The chain runs to 302 residues: Sulfate adenylyltransferase subunit 2 (302 aa).

Residues 280-302 form a disordered region; it reads RQGRAIDHDQSGSMELKKRQGYF.

The protein belongs to the PAPS reductase family. CysD subfamily. As to quaternary structure, heterodimer composed of CysD, the smaller subunit, and CysN.

The catalysed reaction is sulfate + ATP + H(+) = adenosine 5'-phosphosulfate + diphosphate. It functions in the pathway sulfur metabolism; hydrogen sulfide biosynthesis; sulfite from sulfate: step 1/3. Functionally, with CysN forms the ATP sulfurylase (ATPS) that catalyzes the adenylation of sulfate producing adenosine 5'-phosphosulfate (APS) and diphosphate, the first enzymatic step in sulfur assimilation pathway. APS synthesis involves the formation of a high-energy phosphoric-sulfuric acid anhydride bond driven by GTP hydrolysis by CysN coupled to ATP hydrolysis by CysD. The sequence is that of Sulfate adenylyltransferase subunit 2 from Vibrio cholerae serotype O1 (strain ATCC 39315 / El Tor Inaba N16961).